Here is a 1479-residue protein sequence, read N- to C-terminus: Tyrosine-protein kinase BAZ1B (1479 aa).

The 107-residue stretch at 20–126 folds into the WAC domain; it reads EPLFTIPHTQ…GEECDFEVGK (107 aa). Residues 146 to 212 are disordered; it reads EAVEKKSDGA…TSLKKGERKW (67 aa). 2 stretches are compositionally biased toward basic and acidic residues: residues 148–165 and 173–195; these read VEKK…DKEN and LQKK…DRAR. Residues S152, S158, and S161 each carry the phosphoserine modification. The C motif signature appears at 207–213; sequence KGERKWA. Position 266 is a phosphothreonine (T266). Residues 302 to 333 are disordered; that stretch reads NPSTKRRNTGSPDRKPSKKPKRDSSSLSSPLN. Residues S325, S330, S345, S361, and S374 each carry the phosphoserine modification. Disordered stretches follow at residues 376–433 and 448–472; these read NNNK…KTPK and TQKM…HKHL. A compositionally biased stretch (basic residues) spans 381 to 396; sequence HSFHIPKKGPAAKKPG. Polar residues predominate over residues 415 to 425; that stretch reads GQKSTGNSKSP. Residues 454-465 are compositionally biased toward low complexity; that stretch reads TPRSSGGVPRSS. Residues 537 to 587 are a coiled coil; sequence ASMSEEQRKEYLKKKRQELKERLREKAKERREREMLERLEKQKRFEDQELG. Residues 605-669 form the DDT domain; it reads NTLFGDVALV…LQTLLQDEIA (65 aa). A phosphoserine mark is found at S706, S709, and S717. Residues 774-809 adopt a coiled-coil conformation; the sequence is SAELWKERLAVLKEENDKKRAEKQKRKEMEARNKEN. The tract at residues 789–813 is disordered; the sequence is NDKKRAEKQKRKEMEARNKENGKEE. K827 participates in a covalent cross-link: Glycyl lysine isopeptide (Lys-Gly) (interchain with G-Cter in SUMO1); alternate. A Glycyl lysine isopeptide (Lys-Gly) (interchain with G-Cter in SUMO2); alternate cross-link involves residue K827. Glycyl lysine isopeptide (Lys-Gly) (interchain with G-Cter in SUMO2) cross-links involve residues K854, K1043, K1089, and K1107. Residues 854 to 890 are a coiled coil; that stretch reads KRKREIQERETKVRLEREAEEERMRKHKAAAEKAFQE. The segment at 1184–1234 adopts a PHD-type zinc-finger fold; it reads NARCKVCRKKGEDDKLILCDECNKAFHLFCLRPALYEVPDGEWQCPACQPP. Positions 1231–1324 are disordered; sequence CQPPTARRNS…SRPKDDPEVD (94 aa). Positions 1254 to 1277 are enriched in acidic residues; it reads SEGDESGEEEEEEEEEEEEEEDYE. A coiled-coil region spans residues 1257-1284; it reads DESGEEEEEEEEEEEEEEDYEVAGLRLR. Positions 1305 to 1316 are enriched in basic residues; that stretch reads PGKKSHPARRSR. S1315 is modified (phosphoserine). Residue K1331 is modified to N6-acetyllysine. The Bromo domain occupies 1335 to 1439; the sequence is RRQSLELQKC…QCLLALLQKH (105 aa). S1338, S1464, S1466, and S1468 each carry phosphoserine. The tract at residues 1451 to 1479 is disordered; that stretch reads RKFPDRLADDEGDSDSESVGQSRGRRQKK.

The protein belongs to the WAL family. BAZ1B subfamily. In terms of assembly, component of the WICH-1 ISWI chromatin remodeling complex, at least composed of SMARCA1 and BAZ1B/WSTF, which regulates the spacing of histone octamers on the DNA template to facilitate access to DNA. Within the WICH-1 ISWI chromatin remodeling complex interacts with SMARCA1; the interaction is direct. Component of the WICH-5 ISWI chromatin remodeling complex (also called the WICH complex), at least composed of SMARCA5/SNF2H and BAZ1B/WSTF, which regulates the spacing of histone octamers on the DNA template to facilitate access to DNA. Within the WICH-5 ISWI chromatin remodeling complex interacts with SMARCA5/SNF2H; the interaction is direct. Component of the B-WICH chromatin remodeling complex, at least composed of SMARCA5/SNF2H, BAZ1B/WSTF, SF3B1, DEK, MYO1C, ERCC6, MYBBP1A and DDX21. Within the B-WICH chromatin remodeling complex, interacts with SMARCA5/SNF2H, DDX21, DEK, MYBBP1A, SF3B1 and ERCC6. Interacts with MYO1C. Interacts with PCNA; the interaction is direct and is required for BAZ1B/WSTF binding to replication foci during S phase. Interacts with CDT1. It depends on Mn(2+) as a cofactor.

The protein localises to the nucleus. The catalysed reaction is L-tyrosyl-[protein] + ATP = O-phospho-L-tyrosyl-[protein] + ADP + H(+). Functionally, atypical tyrosine-protein kinase that plays a central role in chromatin remodeling and acts as a transcription regulator. Involved in DNA damage response by phosphorylating 'Tyr-142' of histone H2AX (H2AXY142ph). H2AXY142ph plays a central role in DNA repair and acts as a mark that distinguishes between apoptotic and repair responses to genotoxic stress. Regulatory subunit of the ATP-dependent WICH-1 and WICH-5 ISWI chromatin remodeling complexes, which form ordered nucleosome arrays on chromatin and facilitate access to DNA during DNA-templated processes such as DNA replication, transcription, and repair. Both complexes regulate the spacing of nucleosomes along the chromatin and have the ability to slide mononucleosomes to the center of a DNA template. The WICH-1 ISWI chromatin remodeling complex has a lower ATP hydrolysis rate than the WICH-5 ISWI chromatin remodeling complex. The WICH-5 ISWI chromatin remodeling complex regulates the transcription of various genes, has a role in RNA polymerase I transcription. Within the B-WICH complex has a role in RNA polymerase III transcription. Mediates the recruitment of the WICH-5 ISWI chromatin remodeling complex to replication foci during DNA replication. This chain is Tyrosine-protein kinase BAZ1B (Baz1b), found in Mus musculus (Mouse).